The sequence spans 6629 residues: Replicase polyprotein 1ab (6629 aa).

Residues 1 to 1750 (MASSLKQGVS…VASYKTVLCK (1750 aa)) are Cytoplasmic-facing. A Ubiquitin-like 1 domain is found at 675–780 (KTVTFGETTV…SCHLIYRDYE (106 aa)). A disordered region spans residues 783-802 (DDIEEEDAEECDTDSGEAEE). A Macro domain is found at 1003–1179 (VKPATCEKPK…YFDVTCKQKT (177 aa)). The Ubiquitin-like 2 domain maps to 1175 to 1227 (CKQKTIYLTEDGVKYRSIVLKPGDSLGQFGQVYAKNKIVFTADDVEDKEILYV). In terms of domain architecture, Peptidase C16 spans 1236-1497 (EYYGLDAQKY…SKSVKEDVSN (262 aa)). C1274 functions as the For PL-PRO activity in the catalytic mechanism. Zn(2+)-binding residues include C1353, C1355, C1387, and C1390. The segment at 1353-1390 (CNCGIKSYELRGLEACIQPVRATNLLHFKTQYSNCPTC) adopts a C4-type; degenerate zinc-finger fold. Active-site for PL-PRO activity residues include H1437 and D1448. Residues 1751 to 1771 (VVLATLLIVWFVYTSNPVMFT) traverse the membrane as a helical segment. An HD1 region spans residues 1751–1864 (VVLATLLIVW…KPVAGFVIIC (114 aa)). One can recognise a 3Ecto domain in the interval 1769-1833 (MFTGIRVLDF…AYSVEQVYKD (65 aa)). Over 1772-1843 (GIRVLDFLFE…AASGFIFNWN (72 aa)) the chain is Lumenal. 2 disulfides stabilise this stretch: C1785/C1811 and C1802/C1808. Residues 1844 to 1864 (WLYLVFLILFVKPVAGFVIIC) form a helical membrane-spanning segment. The Cytoplasmic portion of the chain corresponds to 1865–2280 (YCVKYLVLNS…TFKCFKSYFK (416 aa)). Positions 1911–2001 (YIQVHHILYC…KLKRHVKPTA (91 aa)) are Y1. Residues 1911 to 2263 (YIQVHHILYC…HTQKLLVEKK (353 aa)) form the CoV Nsp3 Y domain. 8 residues coordinate Zn(2+): H1915, C1920, C1925, C1928, C1961, H1964, C1968, and C1971. Positions 1915 to 1928 (HHILYCKDVTCEVC) are ZF1. The tract at residues 1961 to 1971 (CKRHNWYCRNC) is ZF2. Residues 2002–2104 (YAYHVVDEAC…ILDQALYEQL (103 aa)) are Y2. The tract at residues 2002–2263 (YAYHVVDEAC…HTQKLLVEKK (262 aa)) is coV-Y. A Y3 region spans residues 2105–2163 (VVEPVSKSVIDKVCSILSSIISVDTAALNYKAGTLRDALLSITKDEEAVDMAIFCHNHD). Positions 2164 to 2263 (VDYTGDGFTN…HTQKLLVEKK (100 aa)) are Y4. The helical transmembrane segment at 2281-2301 (WLLIFYILFTACCSGYYYMEV) threads the bilayer. Residues 2281–2664 (WLLIFYILFT…LACCYLGFII (384 aa)) form an HD2 region. Residues 2302–2559 (SKSFVHPMYD…FFTGVNPNIY (258 aa)) are Lumenal-facing. Residues 2560-2580 (MQLATMFLILVVVVLIFAMVI) traverse the membrane as a helical segment. The Cytoplasmic portion of the chain corresponds to 2581-2611 (KFQGVFKAYATTVFITMLVWVINAFILCVHS). Residues 2612-2632 (YNSVLAVILLVLYCYASLVTS) form a helical membrane-spanning segment. Residues 2633 to 2643 (RNTVIIMHCWL) are Lumenal-facing. A helical membrane pass occupies residues 2644–2664 (VFTFGLIVPTWLACCYLGFII). At 2665–3096 (YMYTPLFLWC…SSFVRKATSW (432 aa)) the chain is on the cytoplasmic side. Positions 2684-2779 (LYDGNEFVGN…RYSIGVSRLQ (96 aa)) constitute a Nsp4C domain. The 307-residue stretch at 2780 to 3086 (SGFKKLVSPS…FNQIGGVRLQ (307 aa)) folds into the Peptidase C30 domain. Active-site for 3CL-PRO activity residues include H2820 and C2922. The chain crosses the membrane as a helical span at residues 3097 to 3117 (FWSRCVLACFLFVLCAIVLFT). The interval 3097-3317 (FWSRCVLACF…WLCTCYFGLY (221 aa)) is HD3. Residues 3118 to 3121 (AVPL) are Lumenal-facing. Residues 3122–3142 (KFYVYAAVILLMAVLFISFTV) traverse the membrane as a helical segment. Residues 3143-3151 (KHVMAYMDT) lie on the Cytoplasmic side of the membrane. A helical transmembrane segment spans residues 3152–3172 (FLLPTLITVIIGVCAEVPFIY). Residues 3173 to 3188 (NTLISQVVIFLSQWYD) are Lumenal-facing. A helical membrane pass occupies residues 3189-3209 (PVVFDTMVPWMFLPLVLYTAF). Residues 3210 to 3257 (KCVQGCYMNSFNTSLLMLYQFVKLGFVIYTSSNTLTAYTEGNWELFFE) lie on the Cytoplasmic side of the membrane. A helical transmembrane segment spans residues 3258-3278 (LVHTTVLANVSSNSLIGLFVF). Residues 3279–3296 (KCAKWMLYYCNATYLNNY) lie on the Lumenal side of the membrane. Residues 3297 to 3317 (VLMAVMVNCIGWLCTCYFGLY) traverse the membrane as a helical segment. Topologically, residues 3318–6629 (WWVNKVFGLT…FTSDSFVCTM (3312 aa)) are cytoplasmic. In terms of domain architecture, RdRp Nsp7 cofactor spans 3380–3462 (AKLSDVKCTT…DILKRSTVLQ (83 aa)). The RdRp Nsp8 cofactor domain maps to 3463–3672 (SVTQEFSHIP…GHNKVDVVLQ (210 aa)). The 111-residue stretch at 3673 to 3783 (NNELMPHGVK…GAISNVVVLQ (111 aa)) folds into the Nsp9 ssRNA-binding domain. Residues 3785–3926 (KGHETEEVDA…CDSLRQPKSS (142 aa)) enclose the ExoN/MTase coactivator domain. Zn(2+) contacts are provided by C3858, C3861, H3867, C3878, C3904, C3907, C3915, and C3917. Zinc fingers lie at residues 3858-3878 (CLYC…DGRC) and 3904-3917 (CTVC…GCQC). The NiRAN domain occupies 3940–4198 (YLNRVRGSSE…APERYFEYDV (259 aa)). A Nsp12 Interface domain is found at 4203-4301 (KSYDLLKYDY…MNQDNTMSFS (99 aa)). Zn(2+)-binding residues include H4232, C4238, C4243, C4247, and C4424. The region spanning 4302–4868 (KMGLSQLMQF…NMYRAPTTLQ (567 aa)) is the Nsp12 RNA-dependent RNA polymerase domain. Residues 4304–4517 (GLSQLMQFVG…HQKILKSIVN (214 aa)) are rdRp Fingers N-ter. The rdRp Palm N-ter stretch occupies residues 4518 to 4556 (TRNASVVIGTTKFYGGWDNMLRNLIQGVEDPILMGWDYP). Residues 4548–4710 (PILMGWDYPK…CYNNTLAKQG (163 aa)) form the RdRp catalytic domain. The rdRp Fingers C-ter stretch occupies residues 4557-4615 (KCDRAMPNLLRIAASLVLARKHTNCCSWSERIYRLYNECAQVLSETVLATGGIYVKPGG). Positions 4578, 4581, and 4582 each coordinate Zn(2+). The rdRp Palm C-ter stretch occupies residues 4616-4751 (TSSGDATTAY…EKGPHEFCSQ (136 aa)). Residues S4695, D4696, and D4697 contribute to the active site. Residues 4752-4868 (HTMLVEVDGE…NMYRAPTTLQ (117 aa)) are rdRp Thumb. Positions 4869–4981 (SCGVCVVCNS…DDFNQLATTN (113 aa)) constitute a CV ZBD domain. C4873, C4876, C4884, C4887, C4894, C4897, H4901, H4907, C4918, C4923, C4940, and H4943 together coordinate Zn(2+). The (+)RNA virus helicase ATP-binding domain maps to 5125–5305 (MVPECFVNNI…MVCVKPDIFL (181 aa)). Residue 5150–5157 (GPPGSGKS) coordinates ATP. The 172-residue stretch at 5306–5477 (AKCYRCPKEI…QGTGLFKICN (172 aa)) folds into the (+)RNA virus helicase C-terminal domain. Residues 5539–5753 (MFITRDEAIR…RCLAINNAFC (215 aa)) enclose the ExoN domain. Active-site residues include D5557, E5559, and E5658. 7 residues coordinate Zn(2+): C5674, C5676, C5692, H5695, H5723, C5727, and H5730. Catalysis depends on residues H5734 and D5739. C5745 serves as a coordination point for Zn(2+). The N7-MTase domain occupies 5762–5989 (YPHIANEDEV…NLWKSFSALQ (228 aa)). 5797 to 5803 (DIGNPKG) contributes to the S-adenosyl-L-methionine binding site. The gpppA-binding stretch occupies residues 5877–5891 (CNGGSLYVNKHAFYT). C5915, C5935, C5946, and H5949 together coordinate Zn(2+). The Nsp15 N-terminal oligomerization domain maps to 5990 to 6050 (SIDNIAYNMY…SVAFELYAKR (61 aa)). In terms of domain architecture, AV-Nsp11N/CoV-Nsp15M spans 6051-6166 (NIRTLPNNRI…VYKRVNGAFV (116 aa)). Residues 6183–6324 (EPRSDIERDF…EDGSIKTCYP (142 aa)) form the NendoU domain. Active-site residues include H6212, H6227, K6267, K6371, D6455, K6499, and E6532. The 300-residue stretch at 6327–6626 (QSAWTCGYNM…NTSFTSDSFV (300 aa)) folds into the Nidovirus-type SAM-dependent 2'-O-MTase domain.

This sequence belongs to the coronaviruses polyprotein 1ab family. In terms of assembly, interacts with host PHB and PHB2. As to quaternary structure, interacts with papain-like protease and non-structural protein 6. Monomer. Homodimer. Only the homodimer shows catalytic activity. In terms of assembly, eight copies of nsp7 and eight copies of nsp8 assemble to form a heterohexadecamer dsRNA-encircling ring structure. As to quaternary structure, eight copies of nsp7 and eight copies of nsp8 assemble to form a heterohexadecamer dsRNA-encircling ring structure. Interacts with ORF6 protein. Homodimer. In terms of assembly, homododecamer. Interacts with proofreading exoribonuclease nsp14 and 2'-O-methyltransferase nsp16; these interactions enhance nsp14 and nsp16 enzymatic activities. As to quaternary structure, interacts with host DDX1 (via C-terminus). Interacts with non-structural protein 10. Homohexamer. In terms of assembly, interacts with non-structural protein 10. Mn(2+) serves as cofactor. It depends on Zn(2+) as a cofactor. Specific enzymatic cleavages in vivo by its own proteases yield mature proteins. 3C-like proteinase nsp5 liberates nsps 6-16 from the polyprotein. Papain-like and 3C-like proteinases are autocatalytically processed. Post-translationally, N-glycosylated.

It localises to the host endoplasmic reticulum membrane. Its subcellular location is the host cytoplasm. The protein localises to the host perinuclear region. It is found in the host endoplasmic reticulum. The protein resides in the host endoplasmic reticulum-Golgi intermediate compartment. It carries out the reaction Thiol-dependent hydrolysis of ester, thioester, amide, peptide and isopeptide bonds formed by the C-terminal Gly of ubiquitin (a 76-residue protein attached to proteins as an intracellular targeting signal).. The catalysed reaction is RNA(n) + a ribonucleoside 5'-triphosphate = RNA(n+1) + diphosphate. The enzyme catalyses ATP + H2O = ADP + phosphate + H(+). It catalyses the reaction uridylyl-uridylyl-ribonucleotide-RNA = a 3'-end uridylyl-2',3'-cyclophospho-uridine-RNA + a 5'-end dephospho-ribonucleoside-RNA. It carries out the reaction a 5'-end diphospho-ribonucleoside in mRNA + GTP + H(+) = a 5'-end (5'-triphosphoguanosine)-ribonucleoside in mRNA + diphosphate. The catalysed reaction is a 5'-end (N(7)-methyl 5'-triphosphoguanosine)-ribonucleoside in mRNA + S-adenosyl-L-methionine = a 5'-end (N(7)-methyl 5'-triphosphoguanosine)-(2'-O-methyl-ribonucleoside) in mRNA + S-adenosyl-L-homocysteine + H(+). Functionally, multifunctional protein involved in the transcription and replication of viral RNAs. Contains the proteinases responsible for the cleavages of the polyprotein. May play a role in the modulation of host cell survival signaling pathway by interacting with host PHB and PHB2. Indeed, these two proteins play a role in maintaining the functional integrity of the mitochondria and protecting cells from various stresses. In terms of biological role, responsible for the cleavages located at the N-terminus of the replicase polyprotein. In addition, PL-PRO possesses a deubiquitinating/deISGylating activity and processes both 'Lys-48'- and 'Lys-63'-linked polyubiquitin chains from cellular substrates. Its function is as follows. Plays a role in host membrane rearrangement that leads to creation of cytoplasmic double-membrane vesicles (DMV) necessary for viral replication. Alone is able to induce paired membranes. Coexpression of nsp3 and nsp4 does not result in the formation of DMVs. Functionally, responsible for the majority of cleavages as it cleaves the C-terminus of replicase polyprotein at 11 sites. Recognizes substrates containing the core sequence [ILMVF]-Q-|-[SGACN]. Inhibited by the substrate-analog Cbz-Val-Asn-Ser-Thr-Leu-Gln-CMK. Forms a hexadecamer with nsp8 (8 subunits of each) that may participate in viral replication by acting as a primase. Alternatively, may synthesize substantially longer products than oligonucleotide primers. In terms of biological role, forms a hexadecamer with nsp7 (8 subunits of each) that may participate in viral replication by acting as a primase. Alternatively, may synthesize substantially longer products than oligonucleotide primers. Its function is as follows. Forms a primer, NSP9-pU, which is utilized by the polymerase for the initiation of RNA chains. Interacts with ribosome signal recognition particle RNA (SRP). Together with NSP8, suppress protein integration into the cell membrane, thereby disrupting host immune defenses. Functionally, plays a pivotal role in viral transcription by stimulating both nsp14 3'-5' exoribonuclease and nsp16 2'-O-methyltransferase activities. Therefore plays an essential role in viral mRNAs cap methylation. RNA-directed RNA polymerase that catalyzes the transcription of viral genomic and subgenomic RNAs. Acts in complex with nsp7 and nsp8 to transcribe both the minus and positive strands of genomic RNA. The kinase-like NiRAN domain of NSP12 attaches one or more nucleotides to the amino terminus of NSP9, forming a covalent RNA-protein intermediate that serves as transcription/replication primer. Subgenomic RNAs (sgRNAs) are formed by discontinuous transcription: The polymerase has the ability to pause at transcription-regulating sequences (TRS) and jump to the leader TRS, resulting in a major deletion. This creates a series of subgenomic RNAs that are replicated, transcribed and translated. In addition, Nsp12 is a subunit of the viral RNA capping enzyme that catalyzes the RNA guanylyltransferase reaction for genomic and sub-genomic RNAs. Subsequently, the NiRAN domain transfers RNA to GDP, and forms the core cap structure GpppA-RNA. In terms of biological role, multi-functional protein with a zinc-binding domain in N-terminus displaying RNA and DNA duplex-unwinding activities with 5' to 3' polarity. Activity of helicase is dependent on magnesium. Its function is as follows. Enzyme possessing two different activities: an exoribonuclease activity acting on both ssRNA and dsRNA in a 3' to 5' direction and a N7-guanine methyltransferase activity. Acts as a proofreading exoribonuclease for RNA replication, thereby lowering The sensitivity of the virus to RNA mutagens. Functionally, plays a role in viral transcription/replication and prevents the simultaneous activation of host cell dsRNA sensors, such as MDA5/IFIH1, OAS, and PKR. Acts by degrading the 5'-polyuridines generated during replication of the poly(A) region of viral genomic and subgenomic RNAs. Catalyzes a two-step reaction in which a 2'3'-cyclic phosphate (2'3'-cP) is first generated by 2'-O transesterification, which is then hydrolyzed to a 3'-phosphate (3'-P). If not degraded, poly(U) RNA would hybridize with poly(A) RNA tails and activate host dsRNA sensors. Methyltransferase that mediates mRNA cap 2'-O-ribose methylation to the 5'-cap structure of viral mRNAs. N7-methyl guanosine cap is a prerequisite for binding of nsp16. Therefore plays an essential role in viral mRNAs cap methylation which is essential to evade immune system. The protein is Replicase polyprotein 1ab (rep) of Gallus gallus (Chicken).